Here is a 371-residue protein sequence, read N- to C-terminus: GDP-mannose transporter (371 aa).

Over 1 to 51 the chain is Cytoplasmic; that stretch reads MGVISFYLIGQLLYLIRKKYTTTYRQQQQHQYNMDSKHSTSSSSSGSLATR. A helical transmembrane segment spans residues 52-72; that stretch reads ISNSGPISIAAYCLSSILMTV. Topologically, residues 73–80 are lumenal; it reads TNKYVLSG. The helical transmembrane segment at 81–101 threads the bilayer; sequence FSFNLNFFLLAVQSIVCIVTI. The Cytoplasmic portion of the chain corresponds to 102-121; sequence GSLKSLNIITYRQFNKDEAK. The helical transmembrane segment at 122-138 threads the bilayer; that stretch reads KWSPIAFLLVAMIYTSS. Residues 139–145 are Lumenal-facing; it reads KALQYLS. The helical transmembrane segment at 146-162 threads the bilayer; it reads IPVYTIFKNLTIILIAY. The Cytoplasmic portion of the chain corresponds to 163–171; sequence GEVIWFGGK. The chain crosses the membrane as a helical span at residues 172–192; sequence VTTMALSSFLLMVLSSVIAYY. Residues 193–206 lie on the Lumenal side of the membrane; the sequence is GDNAAVKSHDDAFA. The chain crosses the membrane as a helical span at residues 207 to 227; the sequence is LYLGYFWMLTNCFASAAFVLI. Residues 228–241 are Cytoplasmic-facing; that stretch reads MRKRIKLTNFKDFD. Residues 242 to 262 traverse the membrane as a helical segment; the sequence is TMYYNNLLSIPILLICSFIFE. Topologically, residues 263 to 281 are lumenal; it reads DWSSANVSLNFPADNRVTT. N268 is a glycosylation site (N-linked (GlcNAc...) asparagine). Residues 282 to 302 form a helical membrane-spanning segment; it reads ITAMILSGASSVGISYCSAWC. Residues 303-309 are Cytoplasmic-facing; that stretch reads VRVTSST. A helical transmembrane segment spans residues 310-329; the sequence is TYSMVGALNKLPIALSGLIF. Over 330–332 the chain is Lumenal; the sequence is FEA. Residues 333 to 355 form a helical membrane-spanning segment; sequence AVNFWSVSSIFVGFGAGLVYAVA. Residues 356-371 are Cytoplasmic-facing; it reads KQKQQKEQSQQLPTTK.

The protein belongs to the TPT transporter family. SLC35D subfamily. In terms of assembly, homooligomer.

The protein resides in the golgi apparatus membrane. It localises to the cytoplasmic vesicle membrane. The protein localises to the endoplasmic reticulum membrane. Its function is as follows. Involved in the import of GDP-mannose from the cytoplasm into the Golgi lumen. Involved in hyphal formation. The chain is GDP-mannose transporter (VRG4) from Candida albicans (strain SC5314 / ATCC MYA-2876) (Yeast).